Reading from the N-terminus, the 110-residue chain is Protein YcgL (110 aa).

The 85-residue stretch at 14-98 (MFCVIYRSSK…PPEDLLKQHL (85 aa)) folds into the YcgL domain. The interval 88-110 (PPPEDLLKQHLSSVGQNTSHADR) is disordered. Over residues 97–110 (HLSSVGQNTSHADR) the composition is skewed to polar residues.

The protein is Protein YcgL of Salmonella typhi.